A 342-amino-acid chain; its full sequence is Phosphate acyltransferase (342 aa).

The protein belongs to the PlsX family. As to quaternary structure, homodimer. Probably interacts with PlsY.

The protein resides in the cytoplasm. The enzyme catalyses a fatty acyl-[ACP] + phosphate = an acyl phosphate + holo-[ACP]. The protein operates within lipid metabolism; phospholipid metabolism. Functionally, catalyzes the reversible formation of acyl-phosphate (acyl-PO(4)) from acyl-[acyl-carrier-protein] (acyl-ACP). This enzyme utilizes acyl-ACP as fatty acyl donor, but not acyl-CoA. The protein is Phosphate acyltransferase of Pelotomaculum thermopropionicum (strain DSM 13744 / JCM 10971 / SI).